The primary structure comprises 294 residues: ATP phosphoribosyltransferase (294 aa).

It belongs to the ATP phosphoribosyltransferase family. Long subfamily. Mg(2+) serves as cofactor.

The protein localises to the cytoplasm. It catalyses the reaction 1-(5-phospho-beta-D-ribosyl)-ATP + diphosphate = 5-phospho-alpha-D-ribose 1-diphosphate + ATP. The protein operates within amino-acid biosynthesis; L-histidine biosynthesis; L-histidine from 5-phospho-alpha-D-ribose 1-diphosphate: step 1/9. Its activity is regulated as follows. Feedback inhibited by histidine. In terms of biological role, catalyzes the condensation of ATP and 5-phosphoribose 1-diphosphate to form N'-(5'-phosphoribosyl)-ATP (PR-ATP). Has a crucial role in the pathway because the rate of histidine biosynthesis seems to be controlled primarily by regulation of HisG enzymatic activity. The polypeptide is ATP phosphoribosyltransferase (Maricaulis maris (strain MCS10) (Caulobacter maris)).